Reading from the N-terminus, the 188-residue chain is Xanthine phosphoribosyltransferase (188 aa).

Residues L20 and N27 each contribute to the xanthine site. 127-131 (AYGNA) serves as a coordination point for 5-phospho-alpha-D-ribose 1-diphosphate. K155 contacts xanthine.

Belongs to the purine/pyrimidine phosphoribosyltransferase family. Xpt subfamily. Homodimer.

The protein localises to the cytoplasm. The enzyme catalyses XMP + diphosphate = xanthine + 5-phospho-alpha-D-ribose 1-diphosphate. It functions in the pathway purine metabolism; XMP biosynthesis via salvage pathway; XMP from xanthine: step 1/1. Its function is as follows. Converts the preformed base xanthine, a product of nucleic acid breakdown, to xanthosine 5'-monophosphate (XMP), so it can be reused for RNA or DNA synthesis. This is Xanthine phosphoribosyltransferase from Parabacteroides distasonis (strain ATCC 8503 / DSM 20701 / CIP 104284 / JCM 5825 / NCTC 11152).